Consider the following 242-residue polypeptide: DNA repair protein RecO (242 aa).

Belongs to the RecO family.

Involved in DNA repair and RecF pathway recombination. This is DNA repair protein RecO from Bacteroides fragilis (strain ATCC 25285 / DSM 2151 / CCUG 4856 / JCM 11019 / LMG 10263 / NCTC 9343 / Onslow / VPI 2553 / EN-2).